The chain runs to 568 residues: Protein NDNF (568 aa).

An N-terminal signal peptide occupies residues 1 to 19 (MVLLHWCLLWLLFPLSSRT). 2 consecutive Fibronectin type-III domains span residues 261–331 (NSGK…VGTF) and 445–564 (PSLP…VVKT). N-linked (GlcNAc...) asparagine glycosylation occurs at Asn-322.

Binds heparin and chondroitin sulfate. O-glycosylated; contains heparan sulfate and chondroitin sulfate. In terms of processing, N-glycosylated. As to expression, expressed in neurons along the gonadotropin-releasing hormone (GnRH) expressing neurons migratory route.

The protein localises to the secreted. Secretory protein that plays a role in various cellular processes. Acts as a chemorepellent acting on gonadotropin-releasing hormone (GnRH) expressing neurons regulating their migration to the hypothalamus. Also promotes neuron migration, growth and survival as well as neurite outgrowth and is involved in the development of the olfactory system. May also act through the regulation of growth factors activity and downstream signaling. Also regulates extracellular matrix assembly and cell adhesiveness. Promotes endothelial cell survival, vessel formation and plays an important role in the process of revascularization through NOS3-dependent mechanisms. This Homo sapiens (Human) protein is Protein NDNF (NDNF).